We begin with the raw amino-acid sequence, 703 residues long: ABC transporter G family member 11 (703 aa).

The ABC transporter domain maps to 50 to 293; that stretch reads LTWQDLTVMV…FAQAGFPCPA (244 aa). 87 to 94 provides a ligand contact to ATP; it reads GPSGSGKS. The region spanning 382–594 is the ABC transmembrane type-2 domain; the sequence is LQTYTLTKRS…ALQGQYQNDL (213 aa). An N-linked (GlcNAc...) asparagine glycan is attached at N394. Helical transmembrane passes span 406-426, 436-456, 485-505, 513-533, 540-560, and 628-648; these read LLIYILVTVCIGTIYLNVGTS, CASFVFGFVTFMSIGGFPSFV, TPFLIMITFISGTICYFMVGL, LFFVLCLYASVTVVESLMMAI, FLMGIIIGAGIQGIFMLVSGF, and INLSVILSMIIIYRIIFFIMI. N-linked (GlcNAc...) asparagine glycosylation is found at N671 and N675. A Phosphoserine modification is found at S688.

It belongs to the ABC transporter superfamily. ABCG family. Eye pigment precursor importer (TC 3.A.1.204) subfamily. As to quaternary structure, homodimer. Forms heterodimers with ABCG9, ABCG12 and ABCG14 in epidermal cells. As to expression, expressed in seedlings, roots, stems, leaves, flowers, and siliques, mostly in epidermis, trichomes, vasculatures and developing tissues. Follows an uniparental maternal expression in the seed, thus being the product of a maternally expressed imprinted gene. Accumulates in the phloem. Transcripts seem to be transported from shoots to roots.

Its subcellular location is the cell membrane. In terms of biological role, required for the cuticle, root suberin and pollen coat development by controlling cutin and maybe wax transport to the extracellular matrix. Involved in developmental plasticity and stress responses. Together with ABCG9 and ABCG14, required for vascular development by regulating lipid/sterol homeostasis. May be a transporter of lignin precursors during tracheary element differentiation. The sequence is that of ABC transporter G family member 11 from Arabidopsis thaliana (Mouse-ear cress).